The sequence spans 41 residues: Chymotrypsin inhibitor (41 aa).

Functionally, inhibits chymotrypsin. The polypeptide is Chymotrypsin inhibitor (Eisenia hortensis (European nightcrawler)).